Here is a 374-residue protein sequence, read N- to C-terminus: MLKTYRGKVVVSLAGATVTCLGFLLFLSQHQRIQADGMQNESEVGLRSLQSLGDSETDDGAQPEQNAKKGFSAYFSKLTRSRREADKPSEAPGAATDAPPAEDISADDIFIAVKTTKKFHRSRLDLLLDTWISRNMRQTYIFTDGEDEELKKKIGSHAINTNCSAAHSRQALSCKMAVEYDKFIESGKKWFCHVDDDNYVNTKTLVKLLSNYPHTQDMYIGKPSLDRPIEATERLGDNKMRPVNFWFATGGAGFCISRGLALKMSPWASGGHFMNTAEKIRLPDDCTIGYIIESVLGVSLTRSSLFHSHLENLQQVSKSEVHKQITLSYGMFENKRNIINMKGAFSVEEDPSRFKSVHCLLYPDTPWCPPQVAY.

Over 1–8 the chain is Cytoplasmic; the sequence is MLKTYRGK. The chain crosses the membrane as a helical; Signal-anchor for type II membrane protein span at residues 9-29; that stretch reads VVVSLAGATVTCLGFLLFLSQ. Residues 30–374 lie on the Lumenal side of the membrane; the sequence is HQRIQADGMQ…TPWCPPQVAY (345 aa). N-linked (GlcNAc...) asparagine glycosylation is present at Asn-40. Positions 80-100 are disordered; that stretch reads RSRREADKPSEAPGAATDAPP. Arg-123 is a binding site for substrate. N-linked (GlcNAc...) asparagine glycosylation is present at Asn-162. Cystine bridges form between Cys-163/Cys-174 and Cys-192/Cys-255. Position 196 (Asp-196) interacts with substrate. Position 197 (Asp-197) interacts with Mn(2+). The active site involves Asp-285. His-309 provides a ligand contact to Mn(2+). Cys-359 and Cys-368 are joined by a disulfide.

It belongs to the glycosyltransferase 31 family. Mn(2+) serves as cofactor. Requires Co(2+) as cofactor. In terms of processing, a soluble form may be derived from the membrane form by proteolytic processing. In the embryo, expressed along the A-P axis of the neural tube, within the lateral plate mesoderm, in the presomitic mesoderm and the somites, in specific rhombomeres of the hindbrain (even-numbered rhombomeres) and in the otic vesicles.

It is found in the golgi apparatus membrane. It catalyses the reaction 3-O-(alpha-L-fucosyl)-L-threonyl-[EGF-like domain protein] + UDP-N-acetyl-alpha-D-glucosamine = 3-O-(N-acetyl-beta-D-glucosaminyl-(1-&gt;3)-alpha-L-fucosyl)-L-threonyl-[EGF-like domain protein] + UDP + H(+). The catalysed reaction is 3-O-(alpha-L-fucosyl)-L-seryl-[EGF-like domain protein] + UDP-N-acetyl-alpha-D-glucosamine = 3-O-(N-acetyl-beta-D-glucosaminyl-(1-&gt;3)-alpha-L-fucosyl)-L-seryl-[EGF-like domain protein] + UDP + H(+). Glycosyltransferase that initiates the elongation of O-linked fucose residues attached to EGF-like repeats in the extracellular domain of Notch molecules. Involved in the correct formation of boundaries in the somites and hindbrain. Required for Delta-Notch-mediated induction of hypochord cells at the lateral borders of the midline precursor domain. The polypeptide is Beta-1,3-N-acetylglucosaminyltransferase lunatic fringe (lfng) (Danio rerio (Zebrafish)).